Reading from the N-terminus, the 522-residue chain is Tryptophan 2-halogenase (522 aa).

FAD-binding residues include A17, E36, R42, H44, I45, S48, R103, I127, and D296. 2 residues coordinate chloride: S307 and G308. Position 309 (V309) interacts with FAD.

The protein belongs to the flavin-dependent halogenase family.

In terms of biological role, involved in the incorporation of a chlorinated tryptophan residue into halogenated forms of the secondary metabolites called chondramides. This chain is Tryptophan 2-halogenase, found in Chondromyces crocatus.